The chain runs to 129 residues: Phosphoribosyl-AMP cyclohydrolase (129 aa).

D76 contributes to the Mg(2+) binding site. Zn(2+) is bound at residue C77. Residues D78 and D80 each contribute to the Mg(2+) site. Positions 97 and 104 each coordinate Zn(2+).

This sequence belongs to the PRA-CH family. As to quaternary structure, homodimer. The cofactor is Mg(2+). It depends on Zn(2+) as a cofactor.

The protein resides in the cytoplasm. It carries out the reaction 1-(5-phospho-beta-D-ribosyl)-5'-AMP + H2O = 1-(5-phospho-beta-D-ribosyl)-5-[(5-phospho-beta-D-ribosylamino)methylideneamino]imidazole-4-carboxamide. Its pathway is amino-acid biosynthesis; L-histidine biosynthesis; L-histidine from 5-phospho-alpha-D-ribose 1-diphosphate: step 3/9. In terms of biological role, catalyzes the hydrolysis of the adenine ring of phosphoribosyl-AMP. This Polaromonas naphthalenivorans (strain CJ2) protein is Phosphoribosyl-AMP cyclohydrolase.